Reading from the N-terminus, the 151-residue chain is Deoxyuridine 5'-triphosphate nucleotidohydrolase (151 aa).

Residues R70 to G72, N83, L87 to D89, and M97 each bind substrate.

This sequence belongs to the dUTPase family. The cofactor is Mg(2+).

The catalysed reaction is dUTP + H2O = dUMP + diphosphate + H(+). Its pathway is pyrimidine metabolism; dUMP biosynthesis; dUMP from dCTP (dUTP route): step 2/2. Functionally, this enzyme is involved in nucleotide metabolism: it produces dUMP, the immediate precursor of thymidine nucleotides and it decreases the intracellular concentration of dUTP so that uracil cannot be incorporated into DNA. The polypeptide is Deoxyuridine 5'-triphosphate nucleotidohydrolase (Pseudomonas fluorescens (strain ATCC BAA-477 / NRRL B-23932 / Pf-5)).